Reading from the N-terminus, the 620-residue chain is MIEERDLVLSNGIHCIADIHSELYARLKKESQAATPWVYQKQYGKFVTYFVAVIIFLSLIKKLAFMYYDSSEEFLPEKKNSPTTPSVFLARIMTKLVAFNRYICYRKFPTLIFSYLGIPTSVGTFLVVMATTLYTLLYCFVPHPFYRPCAGFGSPPLSVRAGIMAISLVPFVFSLSGKINVIGWLVGLSYEKINIYHQWASILCLFFSWVHVIPFLRQARHEGGYERMHQRWKASDMWRSGVPPILFLNLLWLSSLPIARRHFYEIFLQLHWILAVGFYISLFYHVYPELNSHMYLVATIVVWFAQLFYRLAVKGYLRPGRSFMASTIANVSIVGEGCVELIVKDVEMAYSPGQHIFVRTIDKGIISNHPFSIFPSAKYPGGIKMLIRAQKGFSKRLYESNDDMKKILIDGPYGGIERDIRSFTNVYLICSGSGISTCLPFLQKYGPILHKTNLEVITLDWVVRHREDISWIRDEMCTLSNNLRQLFLDGKIVVRIYVCSDSTVPGIIKTFPQTIDTASDQSDLAKREKDTEFGQDDTESNSTFDKSNNEYKGLITIIPSKPDLNQVINDYQIGFRNCFICSGSDSLRYTVGNSVAGLQAKVFSNKNVEECYLHSESFGY.

The Extracellular portion of the chain corresponds to 1-45; it reads MIEERDLVLSNGIHCIADIHSELYARLKKESQAATPWVYQKQYGK. Residues 46–66 form a helical membrane-spanning segment; sequence FVTYFVAVIIFLSLIKKLAFM. The Cytoplasmic portion of the chain corresponds to 67–107; sequence YYDSSEEFLPEKKNSPTTPSVFLARIMTKLVAFNRYICYRK. The chain crosses the membrane as a helical span at residues 108-128; it reads FPTLIFSYLGIPTSVGTFLVV. At 129-167 the chain is on the extracellular side; it reads MATTLYTLLYCFVPHPFYRPCAGFGSPPLSVRAGIMAIS. Residues 161 to 320 form the Ferric oxidoreductase domain; sequence AGIMAISLVP…LAVKGYLRPG (160 aa). Residues 168 to 188 traverse the membrane as a helical segment; it reads LVPFVFSLSGKINVIGWLVGL. The Cytoplasmic portion of the chain corresponds to 189 to 194; sequence SYEKIN. Residues 195 to 215 traverse the membrane as a helical segment; the sequence is IYHQWASILCLFFSWVHVIPF. Residues histidine 197 and histidine 211 each coordinate heme. The Extracellular portion of the chain corresponds to 216–237; it reads LRQARHEGGYERMHQRWKASDM. Residues 238 to 258 traverse the membrane as a helical segment; that stretch reads WRSGVPPILFLNLLWLSSLPI. At 259–265 the chain is on the cytoplasmic side; it reads ARRHFYE. Residues 266-286 form a helical membrane-spanning segment; that stretch reads IFLQLHWILAVGFYISLFYHV. Histidine 271 and histidine 285 together coordinate heme. The Extracellular segment spans residues 287–292; that stretch reads YPELNS. The helical transmembrane segment at 293–313 threads the bilayer; that stretch reads HMYLVATIVVWFAQLFYRLAV. The Cytoplasmic segment spans residues 314 to 620; it reads KGYLRPGRSF…CYLHSESFGY (307 aa). In terms of domain architecture, FAD-binding FR-type spans 321 to 419; that stretch reads RSFMASTIAN…DGPYGGIERD (99 aa). 369–375 contacts FAD; it reads HPFSIFP. 411-414 is an NADP(+) binding site; the sequence is GPYG. Positions 519–543 are disordered; that stretch reads SDQSDLAKREKDTEFGQDDTESNST. The span at 523–532 shows a compositional bias: basic and acidic residues; sequence DLAKREKDTE. Position 578–579 (578–579) interacts with NADP(+); that stretch reads CF.

It belongs to the ferric reductase (FRE) family. FAD is required as a cofactor.

Its subcellular location is the cell membrane. The enzyme catalyses 2 a Fe(II)-siderophore + NADP(+) + H(+) = 2 a Fe(III)-siderophore + NADPH. In terms of biological role, cell surface metalloreductase. May be involved in copper homeostasis. In Saccharomyces cerevisiae (strain ATCC 204508 / S288c) (Baker's yeast), this protein is Ferric/cupric reductase transmembrane component 7 (FRE7).